We begin with the raw amino-acid sequence, 122 residues long: Large ribosomal subunit protein bL17 (122 aa).

Belongs to the bacterial ribosomal protein bL17 family. In terms of assembly, part of the 50S ribosomal subunit. Contacts protein L32.

This Nautilia profundicola (strain ATCC BAA-1463 / DSM 18972 / AmH) protein is Large ribosomal subunit protein bL17.